The primary structure comprises 497 residues: MAPVGVEKKLLLGPNGPAVAAAGDLTSEEEEGQSLWSSILSEVSTRARSKLPSGKNILVFGEDGSGKTTLMTKLQGAEHGKKGRGLEYLYLSVHDEDRDDHTRCNVWILDGDLYHKGLLKFAVSAESLRETLVIFVADMSRPWTIMESLQKWASVLREHIDKMKIPPEEMRDLERKFMKDFQDYIEPEEGCQGSPQRRGPLTSGSDEDNVALPLGDNVLTHNLGIPVLVVCTKCDAVSILEKEHDYRDEHLDFIQAHLRGFCLQYGAALIYTSVKEEKNLDLLYKYIVHKTYGFHFTIPALVVEKDAVFIPAGWDNEKKIAILHENFTTVKPEDAYEDFIVKPPVRKLVHDKELAAEDEQVFLMKQQESPARGPSGSPRTQGRGGPASVPSASPGTSVKKPDPNIKNNAASEGVLASFFNSLLSKKTGSPGSPSAGGVQSTAKKSGTEGEPQSFRSLTEQCCQTGQKTVLSNVQEELDRMTRKPDSMVTNSSTENEA.

61–68 (GEDGSGKT) lines the ATP pocket. Disordered regions lie at residues 187-206 (PEEG…SGSD), 366-408 (QQES…IKNN), 423-461 (LSKK…TEQC), and 474-497 (QEEL…ENEA). A phosphoserine mark is found at Ser194, Ser369, and Ser377. Arg383 is subject to Omega-N-methylarginine. Over residues 423–444 (LSKKTGSPGSPSAGGVQSTAKK) the composition is skewed to polar residues. Thr427 carries the phosphothreonine modification. Residues Ser429 and Ser432 each carry the phosphoserine modification. The segment covering 476-485 (ELDRMTRKPD) has biased composition (basic and acidic residues). Polar residues predominate over residues 487–497 (MVTNSSTENEA).

It belongs to the dynein light intermediate chain family. As to quaternary structure, homodimer. The cytoplasmic dynein 1 complex consists of two catalytic heavy chains (HCs) and a number of non-catalytic subunits presented by intermediate chains (ICs), light intermediate chains (LICs) and light chains (LCs); the composition seems to vary in respect to the IC, LIC and LC composition. The heavy chain homodimer serves as a scaffold for the probable homodimeric assembly of the respective non-catalytic subunits. The ICs and LICs bind directly to the HC dimer and the LCs assemble on the IC dimer. Self-associates. Interacts with DYNC1H1; DYNC1LI1 and DYNC1LI2 bind mutually exclusive to DYNC1H1. As to expression, ubiquitous.

The protein localises to the cytoplasm. It localises to the cytoskeleton. Acts as one of several non-catalytic accessory components of the cytoplasmic dynein 1 complex that are thought to be involved in linking dynein to cargos and to adapter proteins that regulate dynein function. Cytoplasmic dynein 1 acts as a motor for the intracellular retrograde motility of vesicles and organelles along microtubules. May play a role in binding dynein to membranous organelles or chromosomes. The chain is Cytoplasmic dynein 1 light intermediate chain 2 (Dync1li2) from Rattus norvegicus (Rat).